We begin with the raw amino-acid sequence, 312 residues long: Glycerol-3-phosphate dehydrogenase [NAD(P)+] (312 aa).

W11, R30, R31, and K95 together coordinate NADPH. Sn-glycerol 3-phosphate-binding residues include K95, G123, and S125. Residue A127 coordinates NADPH. The sn-glycerol 3-phosphate site is built by K177, D230, S240, R241, and N242. The active-site Proton acceptor is the K177. R241 lines the NADPH pocket. Positions 265 and 267 each coordinate NADPH.

It belongs to the NAD-dependent glycerol-3-phosphate dehydrogenase family.

The protein resides in the cytoplasm. The catalysed reaction is sn-glycerol 3-phosphate + NAD(+) = dihydroxyacetone phosphate + NADH + H(+). It catalyses the reaction sn-glycerol 3-phosphate + NADP(+) = dihydroxyacetone phosphate + NADPH + H(+). It functions in the pathway membrane lipid metabolism; glycerophospholipid metabolism. Functionally, catalyzes the reduction of the glycolytic intermediate dihydroxyacetone phosphate (DHAP) to sn-glycerol 3-phosphate (G3P), the key precursor for phospholipid synthesis. The polypeptide is Glycerol-3-phosphate dehydrogenase [NAD(P)+] (Helicobacter pylori (strain HPAG1)).